Consider the following 84-residue polypeptide: Beta-defensin 119 (84 aa).

A signal peptide spans 1-21 (MKFLFLFLAILLATEVPVISG). Disulfide bonds link Cys28/Cys55, Cys35/Cys49, and Cys39/Cys56.

The protein belongs to the beta-defensin family. In terms of tissue distribution, abundant expression in the male reproductive tract only. Expressed abundantly in testis, while expression in epididymis decreased gradually from caput to cauda.

The protein resides in the secreted. In terms of biological role, has antibacterial activity. The chain is Beta-defensin 119 (DEFB119) from Macaca mulatta (Rhesus macaque).